The sequence spans 614 residues: Zinc finger protein ztf-7 (614 aa).

Gly residues predominate over residues 1-10 (MSTSGSGGGN). The disordered stretch occupies residues 1-160 (MSTSGSGGGN…SRPKKPEKMS (160 aa)). Residues 18 to 41 (NVASSPNANPKKNADTESSGGSKN) show a composition bias toward polar residues. Positions 54 to 69 (GSNSRNGSRTNSVSNS) are enriched in low complexity. Positions 74 to 83 (NRKDWTDRKS) are enriched in basic and acidic residues. Residues 132–150 (DYSDEYELDEPFSDSDDED) show a composition bias toward acidic residues. 2 C2H2-type zinc fingers span residues 356–380 (NECI…KRNH) and 447–470 (VVCL…KTTH).

It belongs to the ZNF277 family. Interacts with rps-2.

The protein localises to the cytoplasm. Functionally, probable transcription factor. Limits the ability to tolerate cold environment or cold-warm stress. In complex with rps-2, mediates the cold-warm shock response by promoting translocation of components of the RNA exosome from the nucleolus to nucleoplasm. The protein is Zinc finger protein ztf-7 of Caenorhabditis elegans.